The primary structure comprises 332 residues: Probable allantoicase (332 aa).

It belongs to the allantoicase family.

It catalyses the reaction allantoate + H2O = (S)-ureidoglycolate + urea. Its pathway is nitrogen metabolism; (S)-allantoin degradation; (S)-ureidoglycolate from allantoate (aminidohydrolase route): step 1/1. The chain is Probable allantoicase from Pseudomonas aeruginosa (strain UCBPP-PA14).